The following is a 339-amino-acid chain: Ribosomal RNA large subunit methyltransferase F (339 aa).

Residues 1–26 (MTAPSTPKPQRKKPKTATTAKPVVPR) are disordered.

It belongs to the methyltransferase superfamily. METTL16/RlmF family.

It localises to the cytoplasm. The enzyme catalyses adenosine(1618) in 23S rRNA + S-adenosyl-L-methionine = N(6)-methyladenosine(1618) in 23S rRNA + S-adenosyl-L-homocysteine + H(+). In terms of biological role, specifically methylates the adenine in position 1618 of 23S rRNA. The chain is Ribosomal RNA large subunit methyltransferase F from Pseudomonas fluorescens (strain SBW25).